Reading from the N-terminus, the 248-residue chain is UPF0736 protein BC_1176 (248 aa).

Belongs to the UPF0736 family.

This chain is UPF0736 protein BC_1176, found in Bacillus cereus (strain ATCC 14579 / DSM 31 / CCUG 7414 / JCM 2152 / NBRC 15305 / NCIMB 9373 / NCTC 2599 / NRRL B-3711).